We begin with the raw amino-acid sequence, 156 residues long: Cyclin-dependent kinase inhibitor 2A (156 aa).

M1 bears the N-acetylmethionine mark. A phosphoserine mark is found at S7 and S8. 4 ANK repeats span residues 11–40 (PSAD…LPNA), 44–72 (YGRR…EPNC), 77–106 (TLTR…RLDV), and 110–139 (WGRL…GTRG). Phosphoserine occurs at positions 140 and 152.

This sequence belongs to the CDKN2 cyclin-dependent kinase inhibitor family. In terms of assembly, heterodimer with CDK4 or CDK6. Predominant p16 complexes contained CDK6. Interacts with CDK4 (both 'T-172'-phosphorylated and non-phosphorylated forms); the interaction inhibits cyclin D-CDK4 kinase activity. Interacts with ISCO2. In terms of processing, phosphorylation seems to increase interaction with CDK4. In terms of tissue distribution, widely expressed but not detected in brain or skeletal muscle. Isoform 3 is pancreas-specific.

It localises to the cytoplasm. The protein resides in the nucleus. Its function is as follows. Acts as a negative regulator of the proliferation of normal cells by interacting strongly with CDK4 and CDK6. This inhibits their ability to interact with cyclins D and to phosphorylate the retinoblastoma protein. The polypeptide is Cyclin-dependent kinase inhibitor 2A (Homo sapiens (Human)).